Consider the following 340-residue polypeptide: uncharacterized protein (340 aa).

Positions 193–207 (KELPKEKKKSDGDKT) are enriched in basic and acidic residues. The tract at residues 193–340 (KELPKEKKKS…FIPLQPKKKI (148 aa)) is disordered. The segment covering 217-228 (FFGFWGHSGSKS) has biased composition (low complexity). Over residues 235 to 244 (EKPIEAKNEI) the composition is skewed to basic and acidic residues. Composition is skewed to polar residues over residues 263 to 279 (SDKN…SDQQ) and 307 to 328 (PAQS…SLTL).

This is an uncharacterized protein from Saccharomyces cerevisiae (strain ATCC 204508 / S288c) (Baker's yeast).